We begin with the raw amino-acid sequence, 243 residues long: DNA repair protein RecO (243 aa).

The protein belongs to the RecO family.

Involved in DNA repair and RecF pathway recombination. The polypeptide is DNA repair protein RecO (Azoarcus sp. (strain BH72)).